We begin with the raw amino-acid sequence, 169 residues long: Crossover junction endodeoxyribonuclease RuvC (169 aa).

Active-site residues include Asp-12, Glu-72, and Asp-144. Positions 12, 72, and 144 each coordinate Mg(2+).

The protein belongs to the RuvC family. Homodimer which binds Holliday junction (HJ) DNA. The HJ becomes 2-fold symmetrical on binding to RuvC with unstacked arms; it has a different conformation from HJ DNA in complex with RuvA. In the full resolvosome a probable DNA-RuvA(4)-RuvB(12)-RuvC(2) complex forms which resolves the HJ. Mg(2+) serves as cofactor.

Its subcellular location is the cytoplasm. It carries out the reaction Endonucleolytic cleavage at a junction such as a reciprocal single-stranded crossover between two homologous DNA duplexes (Holliday junction).. The RuvA-RuvB-RuvC complex processes Holliday junction (HJ) DNA during genetic recombination and DNA repair. Endonuclease that resolves HJ intermediates. Cleaves cruciform DNA by making single-stranded nicks across the HJ at symmetrical positions within the homologous arms, yielding a 5'-phosphate and a 3'-hydroxyl group; requires a central core of homology in the junction. The consensus cleavage sequence is 5'-(A/T)TT(C/G)-3'. Cleavage occurs on the 3'-side of the TT dinucleotide at the point of strand exchange. HJ branch migration catalyzed by RuvA-RuvB allows RuvC to scan DNA until it finds its consensus sequence, where it cleaves and resolves the cruciform DNA. The protein is Crossover junction endodeoxyribonuclease RuvC of Xanthobacter autotrophicus (strain ATCC BAA-1158 / Py2).